The chain runs to 393 residues: Cell division protein FtsZ 2 (393 aa).

The interval 1-28 is disordered; that stretch reads MQDIVQDALDNAEAEQREMDGDGDGDEF. GTP is bound by residues 40 to 44, 127 to 129, glutamate 158, arginine 161, and aspartate 204; these read GAGNN and GTG. The interval 339–393 is disordered; that stretch reads GPSTQKQADKSRRELQDVDSKQRAADDAGAGGFGGAHSDGGQDEVEQENGLDVIR. Over residues 345 to 364 the composition is skewed to basic and acidic residues; the sequence is QADKSRRELQDVDSKQRAAD. The span at 367–376 shows a compositional bias: gly residues; it reads GAGGFGGAHS.

It belongs to the FtsZ family. Homodimer. Polymerizes to form a dynamic ring structure in a strictly GTP-dependent manner. Interacts directly with several other division proteins.

It is found in the cytoplasm. In terms of biological role, essential cell division protein that forms a contractile ring structure (Z ring) at the future cell division site. The regulation of the ring assembly controls the timing and the location of cell division. One of the functions of the FtsZ ring is to recruit other cell division proteins to the septum to produce a new cell wall between the dividing cells. Binds GTP and shows GTPase activity. Overexpression causes significant changes in cell morphology. This Halobacterium salinarum (strain ATCC 29341 / DSM 671 / R1) protein is Cell division protein FtsZ 2.